Here is a 283-residue protein sequence, read N- to C-terminus: Elongation factor Ts (283 aa).

Positions threonine 80–valine 83 are involved in Mg(2+) ion dislocation from EF-Tu.

Belongs to the EF-Ts family.

It localises to the cytoplasm. Functionally, associates with the EF-Tu.GDP complex and induces the exchange of GDP to GTP. It remains bound to the aminoacyl-tRNA.EF-Tu.GTP complex up to the GTP hydrolysis stage on the ribosome. In Haemophilus influenzae (strain PittEE), this protein is Elongation factor Ts.